Here is a 244-residue protein sequence, read N- to C-terminus: tRNA (guanine-N(1)-)-methyltransferase (244 aa).

S-adenosyl-L-methionine is bound by residues G120 and 140–145 (IGDYIL).

This sequence belongs to the RNA methyltransferase TrmD family. In terms of assembly, homodimer.

It is found in the cytoplasm. The enzyme catalyses guanosine(37) in tRNA + S-adenosyl-L-methionine = N(1)-methylguanosine(37) in tRNA + S-adenosyl-L-homocysteine + H(+). In terms of biological role, specifically methylates guanosine-37 in various tRNAs. This is tRNA (guanine-N(1)-)-methyltransferase from Brucella abortus (strain S19).